The following is a 106-amino-acid chain: PAT complex subunit Asterix (106 aa).

Over residues 1 to 10 the composition is skewed to polar residues; the sequence is MSANSMSDPR. The interval 1 to 29 is disordered; that stretch reads MSANSMSDPRSPNKVLRYKPPPSECNPAL. Serine 2 carries the post-translational modification N-acetylserine. Over 2-32 the chain is Cytoplasmic; it reads SANSMSDPRSPNKVLRYKPPPSECNPALDDP. Residues 33–51 form a helical membrane-spanning segment; that stretch reads TPDYMNLLGMIFSMCGLML. A topological domain (lumenal) is located at residue lysine 52. Residues 53 to 70 form a helical membrane-spanning segment; it reads LKWCAWVAVYCSFISFAN. Residues 71–74 lie on the Cytoplasmic side of the membrane; it reads SRSS. A helical transmembrane segment spans residues 75–95; it reads EDTKQMMSSFMLSISAVVMSY. At 96–106 the chain is on the lumenal side; that stretch reads LQNPQPMTPPW.

This sequence belongs to the Asterix family. In terms of assembly, component of the PAT complex, composed of WDR83OS/Asterix and CCDC47. The PAT complex is part of the multi-pass translocon (MPT) complex, composed of three subcomplexes, the GEL complex (composed of RAB5IF/OPTI and TMCO1), the BOS complex (composed of NCLN/Nicalin, NOMO1 and TMEM147) and the PAT complex (composed of WDR83OS/Asterix and CCDC47). The MPT complex associates with the SEC61 complex.

Its subcellular location is the endoplasmic reticulum membrane. In terms of biological role, component of the multi-pass translocon (MPT) complex that mediates insertion of multi-pass membrane proteins into the lipid bilayer of membranes. The MPT complex takes over after the SEC61 complex: following membrane insertion of the first few transmembrane segments of proteins by the SEC61 complex, the MPT complex occludes the lateral gate of the SEC61 complex to promote insertion of subsequent transmembrane regions. Within the MPT complex, the PAT subcomplex sequesters any highly polar regions in the transmembrane domains away from the non-polar membrane environment until they can be buried in the interior of the fully assembled protein. Within the PAT subcomplex, WDR83OS/Asterix binds to and redirects the substrate to a location behind the SEC61 complex. The polypeptide is PAT complex subunit Asterix (WDR83OS) (Sus scrofa (Pig)).